The following is a 131-amino-acid chain: Large ribosomal subunit protein bL17 (131 aa).

This sequence belongs to the bacterial ribosomal protein bL17 family. As to quaternary structure, part of the 50S ribosomal subunit. Contacts protein L32.

The chain is Large ribosomal subunit protein bL17 from Burkholderia ambifaria (strain MC40-6).